A 392-amino-acid polypeptide reads, in one-letter code: MTDRQTDTAPSPSAHLLAGGLPTVDAAASREEPKPAPGGGVEGVGARGIARKLFVQLLGSSRSVVAVVCAAGDKPIGAGRSASSGLEKPGPEKRGEEEKEEERGPQWALGSQEPSSWTGEAAVCADSAPAARAPQAPARASVPEGRGARQGAQESGLPRSPSRRGSASRAGPGRASETMNFLLSWVHWTLALLLYLHHAKWSQAAPTTEGEQKSHEVIKFMDVYQRSYCRPIETLVDIFQEYPDEIEYIFKPSCVPLMRCAGCCNDEALECVPTSESNITMQIMRIKPHQSQHIGEMSFLQHSRCECRPKKDRTKPEKKSVRGKGKGQKRKRKKSRFKSWSVHCEPCSERRKHLFVQDPQTCKCSCKNTDSRCKARQLELNERTCRCDKPRR.

2 disordered regions span residues 1–44 (MTDR…VEGV) and 73–174 (DKPI…GPGR). Residues 89 to 104 (PGPEKRGEEEKEEERG) are compositionally biased toward basic and acidic residues. Low complexity-rich tracts occupy residues 121–143 (AAVCADSAPAARAPQAPARASVP) and 158–174 (PRSPSRRGSASRAGPGR). Disulfide bonds link cysteine 229-cysteine 271, cysteine 260-cysteine 305, and cysteine 264-cysteine 307. N-linked (GlcNAc...) asparagine glycosylation is present at asparagine 278. A compositionally biased stretch (basic and acidic residues) spans 309–320 (PKKDRTKPEKKS). The tract at residues 309–337 (PKKDRTKPEKKSVRGKGKGQKRKRKKSRF) is disordered. The span at 321-337 (VRGKGKGQKRKRKKSRF) shows a compositional bias: basic residues.

The protein belongs to the PDGF/VEGF growth factor family. As to quaternary structure, homodimer; disulfide-linked. Also found as heterodimer with PGF. Interacts with NRP1. Interacts with isoform 2 of BSG. Interacts with CD82; this interaction inhibits VEGFA-mediated signaling pathway. In terms of processing, produced by use of an alternative upstream CUG codon and post-translationally processed into the N-terminal N-VEGF form and the C-terminal secreted VEGFA form. In developing embryos, expressed mainly in the choroid plexus, paraventricular neuroepithelium, placenta and kidney glomeruli. Also found in bronchial epithelium, adrenal gland and in seminiferous tubules of testis. High expression continues in kidney glomeruli and choroid plexus in adults.

It is found in the cytoplasm. The protein localises to the nucleus. Its subcellular location is the secreted. It localises to the endoplasmic reticulum. The protein resides in the golgi apparatus. It is found in the extracellular space. The protein localises to the extracellular matrix. Its subcellular location is the cell membrane. In terms of biological role, participates in the induction of key genes involved in the response to hypoxia and in the induction of angiogenesis such as HIF1A. Involved in protecting cells from hypoxia-mediated cell death. Functionally, growth factor active in angiogenesis, vasculogenesis and endothelial cell growth. Induces endothelial cell proliferation, promotes cell migration, inhibits apoptosis and induces permeabilization of blood vessels. Binds to the FLT1/VEGFR1 and KDR/VEGFR2 receptors, heparan sulfate and heparin. Binds to the NRP1/neuropilin-1 receptor. Binding to NRP1 receptor initiates a signaling pathway needed for motor neuron axon guidance and cell body migration, including for the caudal migration of facial motor neurons from rhombomere 4 to rhombomere 6 during embryonic development. Also binds the DEAR/FBXW7-AS1 receptor. May play a role in increasing vascular permeability during lactation, when increased transport of molecules from the blood is required for efficient milk protein synthesis. The protein is Vascular endothelial growth factor A, long form (Vegfa) of Mus musculus (Mouse).